We begin with the raw amino-acid sequence, 733 residues long: Alpha-galactosidase 1 (733 aa).

Aspartate 480 acts as the Nucleophile in catalysis. The active-site Proton donor is aspartate 550.

It belongs to the glycosyl hydrolase 36 family.

It carries out the reaction Hydrolysis of terminal, non-reducing alpha-D-galactose residues in alpha-D-galactosides, including galactose oligosaccharides, galactomannans and galactolipids.. Its function is as follows. Alpha-galactosidase associated with the raffinose operon. The sequence is that of Alpha-galactosidase 1 (agaR) from Pediococcus pentosaceus.